The chain runs to 221 residues: ATP phosphoribosyltransferase (221 aa).

Belongs to the ATP phosphoribosyltransferase family. Short subfamily. Heteromultimer composed of HisG and HisZ subunits.

It is found in the cytoplasm. The catalysed reaction is 1-(5-phospho-beta-D-ribosyl)-ATP + diphosphate = 5-phospho-alpha-D-ribose 1-diphosphate + ATP. The protein operates within amino-acid biosynthesis; L-histidine biosynthesis; L-histidine from 5-phospho-alpha-D-ribose 1-diphosphate: step 1/9. Its function is as follows. Catalyzes the condensation of ATP and 5-phosphoribose 1-diphosphate to form N'-(5'-phosphoribosyl)-ATP (PR-ATP). Has a crucial role in the pathway because the rate of histidine biosynthesis seems to be controlled primarily by regulation of HisG enzymatic activity. The chain is ATP phosphoribosyltransferase from Anaeromyxobacter sp. (strain K).